The sequence spans 223 residues: Thymidine kinase (223 aa).

ATP contacts are provided by residues 19–26 (GPMFAGKT) and 96–99 (DEVQ). The Proton acceptor role is filled by Glu97. Zn(2+) is bound by residues Cys153, Cys156, Cys191, and His194.

This sequence belongs to the thymidine kinase family. In terms of assembly, homotetramer.

The protein localises to the cytoplasm. The enzyme catalyses thymidine + ATP = dTMP + ADP + H(+). In Ureaplasma urealyticum serovar 10 (strain ATCC 33699 / Western), this protein is Thymidine kinase.